A 62-amino-acid chain; its full sequence is Arabinogalactan protein 40 (62 aa).

Residues 1 to 22 (MEMKNIFVALFISAVLVSSVSA) form the signal peptide. 4-hydroxyproline is present on residues Pro28, Pro30, and Pro32. Pro28, Pro30, and Pro32 each carry an O-linked (Ara...) hydroxyproline glycan. Ser35 carries GPI-anchor amidated serine lipidation. A propeptide spans 36–62 (SASTVAFPVVGSIVAASLSAFLALLLQ) (removed in mature form).

It belongs to the AG-peptide AGP family. Post-translationally, contains 4-hydroxyproline; hydroxylated on Pro-28, Pro-30 and Pro-32. In terms of processing, O-glycosylated on hydroxyprolines; noncontiguous hydroxylproline residues are glycosylated with arabinogalactan.

It localises to the cell membrane. Its function is as follows. Proteoglycan that seems to be implicated in diverse developmental roles such as differentiation, cell-cell recognition, embryogenesis and programmed cell death. The chain is Arabinogalactan protein 40 from Arabidopsis thaliana (Mouse-ear cress).